A 110-amino-acid chain; its full sequence is Large ribosomal subunit protein uL22 (110 aa).

Belongs to the universal ribosomal protein uL22 family. As to quaternary structure, part of the 50S ribosomal subunit.

Its function is as follows. This protein binds specifically to 23S rRNA; its binding is stimulated by other ribosomal proteins, e.g. L4, L17, and L20. It is important during the early stages of 50S assembly. It makes multiple contacts with different domains of the 23S rRNA in the assembled 50S subunit and ribosome. The globular domain of the protein is located near the polypeptide exit tunnel on the outside of the subunit, while an extended beta-hairpin is found that lines the wall of the exit tunnel in the center of the 70S ribosome. This is Large ribosomal subunit protein uL22 from Shigella flexneri serotype 5b (strain 8401).